The primary structure comprises 299 residues: 4-diphosphocytidyl-2-C-methyl-D-erythritol kinase (299 aa).

Lys17 is a catalytic residue. ATP is bound at residue 103–113 (PVASGIGGGSG). Asp145 is a catalytic residue.

This sequence belongs to the GHMP kinase family. IspE subfamily.

The enzyme catalyses 4-CDP-2-C-methyl-D-erythritol + ATP = 4-CDP-2-C-methyl-D-erythritol 2-phosphate + ADP + H(+). The protein operates within isoprenoid biosynthesis; isopentenyl diphosphate biosynthesis via DXP pathway; isopentenyl diphosphate from 1-deoxy-D-xylulose 5-phosphate: step 3/6. Its function is as follows. Catalyzes the phosphorylation of the position 2 hydroxy group of 4-diphosphocytidyl-2C-methyl-D-erythritol. This Bartonella tribocorum (strain CIP 105476 / IBS 506) protein is 4-diphosphocytidyl-2-C-methyl-D-erythritol kinase.